The following is a 333-amino-acid chain: Ephrin-B2 (333 aa).

The signal sequence occupies residues 1–27; that stretch reads MAVRRDSVWKYCWGVLMVLCRTAISKS. One can recognise an Ephrin RBD domain in the interval 28-164; that stretch reads IVLEPIYWNS…TRAMKILMKV (137 aa). Residues 28–229 are Extracellular-facing; that stretch reads IVLEPIYWNS…ILGSEVALFA (202 aa). A glycan (N-linked (GlcNAc...) asparagine) is linked at Asn36. 2 cysteine pairs are disulfide-bonded: Cys62/Cys101 and Cys89/Cys153. The N-linked (GlcNAc...) asparagine glycan is linked to Asn139. The segment at 165 to 213 is disordered; the sequence is GQDASSAGSTRNKDPTRRPELEAGTNGRSSTTSPFVKPNPGSSTDGNSA. The span at 175–185 shows a compositional bias: basic and acidic residues; that stretch reads RNKDPTRRPEL. Positions 190–213 are enriched in polar residues; that stretch reads NGRSSTTSPFVKPNPGSSTDGNSA. The chain crosses the membrane as a helical span at residues 230–250; sequence GIASGCIIFIVIIITLVVLLL. The Cytoplasmic portion of the chain corresponds to 251 to 333; it reads KYRRRHRKHS…QSPANIYYKV (83 aa). Phosphoserine is present on Ser260. Thr274 is modified (phosphothreonine). At Arg277 the chain carries Omega-N-methylarginine. The PDZ-binding signature appears at 331–333; that stretch reads YKV.

It belongs to the ephrin family. In terms of assembly, interacts with PDZRN3. Binds to the receptor tyrosine kinases EPHA4, EPHB4 and EPHA3. As to quaternary structure, (Microbial infection) Interacts with Hendra virus and Nipah virus G protein. Post-translationally, inducible phosphorylation of tyrosine residues in the cytoplasmic domain. In terms of tissue distribution, lung and kidney.

The protein localises to the cell membrane. Its subcellular location is the cell junction. It is found in the adherens junction. In terms of biological role, cell surface transmembrane ligand for Eph receptors, a family of receptor tyrosine kinases which are crucial for migration, repulsion and adhesion during neuronal, vascular and epithelial development. Binds promiscuously Eph receptors residing on adjacent cells, leading to contact-dependent bidirectional signaling into neighboring cells. The signaling pathway downstream of the receptor is referred to as forward signaling while the signaling pathway downstream of the ephrin ligand is referred to as reverse signaling. Binds to receptor tyrosine kinase including EPHA4, EPHA3 and EPHB4. Together with EPHB4 plays a central role in heart morphogenesis and angiogenesis through regulation of cell adhesion and cell migration. EPHB4-mediated forward signaling controls cellular repulsion and segregation from EFNB2-expressing cells. May play a role in constraining the orientation of longitudinally projecting axons. (Microbial infection) Acts as a receptor for Hendra virus and Nipah virus. This Homo sapiens (Human) protein is Ephrin-B2 (EFNB2).